A 514-amino-acid chain; its full sequence is Respiratory nitrate reductase 2 beta chain (514 aa).

4Fe-4S ferredoxin-type domains are found at residues 7 to 35 (VGMV…GREG), 174 to 205 (TFMM…KREE), and 207 to 236 (GIVL…FNWK). The [4Fe-4S] cluster site is built by Cys-16, Cys-19, Cys-22, Cys-26, Cys-183, Cys-186, and Cys-191. Positions 195, 216, and 222 each coordinate [3Fe-4S] cluster. [4Fe-4S] cluster contacts are provided by Cys-226, Cys-243, Cys-246, Cys-258, and Cys-262.

In terms of assembly, dimer of heterotrimers each composed of an alpha, a beta and a gamma chain. Alpha and beta are catalytic chains; gamma chains are involved in binding the enzyme complex to the cytoplasmic membrane. Requires [4Fe-4S] cluster as cofactor. It depends on [3Fe-4S] cluster as a cofactor.

It localises to the cell membrane. It carries out the reaction nitrate + a quinol = a quinone + nitrite + H2O. Functionally, this is a second nitrate reductase enzyme which can substitute for the NRA enzyme and allows E.coli to use nitrate as an electron acceptor during anaerobic growth. The beta chain is an electron transfer unit containing four cysteine clusters involved in the formation of iron-sulfur centers. Electrons are transferred from the gamma chain to the molybdenum cofactor of the alpha subunit. The protein is Respiratory nitrate reductase 2 beta chain (narY) of Escherichia coli (strain K12).